The following is a 398-amino-acid chain: Chorismate synthase (398 aa).

NADP(+)-binding residues include Arg-44 and Arg-50. Residues Arg-133–Ser-135, Gln-261–Ala-262, Gly-306, Lys-321–Thr-325, and Arg-347 each bind FMN.

Belongs to the chorismate synthase family. As to quaternary structure, homotetramer. The cofactor is FMNH2.

The catalysed reaction is 5-O-(1-carboxyvinyl)-3-phosphoshikimate = chorismate + phosphate. It functions in the pathway metabolic intermediate biosynthesis; chorismate biosynthesis; chorismate from D-erythrose 4-phosphate and phosphoenolpyruvate: step 7/7. In terms of biological role, catalyzes the anti-1,4-elimination of the C-3 phosphate and the C-6 proR hydrogen from 5-enolpyruvylshikimate-3-phosphate (EPSP) to yield chorismate, which is the branch point compound that serves as the starting substrate for the three terminal pathways of aromatic amino acid biosynthesis. This reaction introduces a second double bond into the aromatic ring system. The protein is Chorismate synthase of Aquifex aeolicus (strain VF5).